Reading from the N-terminus, the 78-residue chain is HLFVPGPVNIPDQVLRTLLEDVKKLASRLRSDSQHTIKLLDAYRVFFDWKDYLKKVFRNVNTLLKDLGYPVKPLIPSR.

It belongs to the class-V pyridoxal-phosphate-dependent aminotransferase family. In terms of assembly, homodimer. Pyridoxal 5'-phosphate serves as cofactor. In terms of tissue distribution, expressed in leaves but not in root tissue or seedlings.

Its subcellular location is the peroxisome. It catalyses the reaction glyoxylate + L-serine = 3-hydroxypyruvate + glycine. The catalysed reaction is glyoxylate + L-alanine = glycine + pyruvate. With respect to regulation, inhibited by aminooxyacetate. The sequence is that of Serine--glyoxylate aminotransferase from Triticum aestivum (Wheat).